The primary structure comprises 775 residues: Isopimaradiene synthase (775 aa).

A chloroplast-targeting transit peptide spans 1–36; the sequence is MFSSSLKLKTNPLMDNKIHRSSSDRDFRGSTISSVK. Aspartate 525, aspartate 529, asparagine 669, glutamine 672, and glutamate 677 together coordinate Mg(2+). Positions 525 to 529 match the DDXXD motif motif; the sequence is DDFFD.

This sequence belongs to the terpene synthase family. Mg(2+) is required as a cofactor. Ubiquitous expression in roots, stems, leaves and flowers.

The protein localises to the plastid. The protein resides in the chloroplast. The enzyme catalyses (+)-copalyl diphosphate = isopimara-8(14),15-diene + diphosphate. The protein operates within secondary metabolite biosynthesis; terpenoid biosynthesis. Functionally, involved in the biosynthesis of ent-kaurene diterpenoids natural products such as oridonin, miltiradiene, eriocalyxin B and nezukol, known to exhibit antitumor, anti-inflammatory and antibacterial activities. Catalyzes the conversion of (+)-copalyl diphosphate ((+)-CPP) to isopimaradiene. This Isodon rubescens (Rabdosia rubescens) protein is Isopimaradiene synthase.